The chain runs to 882 residues: DNA mismatch repair protein MutS (882 aa).

629-636 (GPNMGGKS) contacts ATP.

The protein belongs to the DNA mismatch repair MutS family.

This protein is involved in the repair of mismatches in DNA. It is possible that it carries out the mismatch recognition step. This protein has a weak ATPase activity. This Ralstonia nicotianae (strain ATCC BAA-1114 / GMI1000) (Ralstonia solanacearum) protein is DNA mismatch repair protein MutS.